The following is a 170-amino-acid chain: Large ribosomal subunit protein bL9 (170 aa).

A disordered region spans residues 149-170 (RTEEADAEESAAEEPAVEEAAE). Residues 153–170 (ADAEESAAEEPAVEEAAE) are compositionally biased toward acidic residues.

Belongs to the bacterial ribosomal protein bL9 family.

Its function is as follows. Binds to the 23S rRNA. This Oleidesulfovibrio alaskensis (strain ATCC BAA-1058 / DSM 17464 / G20) (Desulfovibrio alaskensis) protein is Large ribosomal subunit protein bL9.